A 189-amino-acid chain; its full sequence is Peptidyl-tRNA hydrolase (189 aa).

Residue Y15 participates in tRNA binding. H20 serves as the catalytic Proton acceptor. 3 residues coordinate tRNA: F66, N68, and N114.

This sequence belongs to the PTH family. In terms of assembly, monomer.

It is found in the cytoplasm. It catalyses the reaction an N-acyl-L-alpha-aminoacyl-tRNA + H2O = an N-acyl-L-amino acid + a tRNA + H(+). In terms of biological role, hydrolyzes ribosome-free peptidyl-tRNAs (with 1 or more amino acids incorporated), which drop off the ribosome during protein synthesis, or as a result of ribosome stalling. Functionally, catalyzes the release of premature peptidyl moieties from peptidyl-tRNA molecules trapped in stalled 50S ribosomal subunits, and thus maintains levels of free tRNAs and 50S ribosomes. This is Peptidyl-tRNA hydrolase from Streptococcus equi subsp. zooepidemicus (strain MGCS10565).